We begin with the raw amino-acid sequence, 204 residues long: LexA repressor (204 aa).

Positions 28–48 form a DNA-binding region, H-T-H motif; the sequence is RAEIAQELGFKSPNAAEEHLK. Catalysis depends on for autocatalytic cleavage activity residues Ser125 and Lys162.

The protein belongs to the peptidase S24 family. As to quaternary structure, homodimer.

The enzyme catalyses Hydrolysis of Ala-|-Gly bond in repressor LexA.. Functionally, represses a number of genes involved in the response to DNA damage (SOS response), including recA and lexA. In the presence of single-stranded DNA, RecA interacts with LexA causing an autocatalytic cleavage which disrupts the DNA-binding part of LexA, leading to derepression of the SOS regulon and eventually DNA repair. In Pseudomonas aeruginosa (strain LESB58), this protein is LexA repressor.